The following is a 414-amino-acid chain: T-box transcription factor TBX3 (414 aa).

Residues 114 to 287 constitute a DNA-binding region (T-box); that stretch reads LWEQFHKRGT…NNPFAKGFRD (174 aa). The segment at 359–414 is disordered; that stretch reads XDSXDDXXLEXSEWGKISTTTXTHPWXQPAXGRQRVTTXGTKGAAVPKATSSPXTR.

The protein resides in the nucleus. Its function is as follows. Transcriptional repressor involved in developmental processes. Binds to the palindromic T site 5'-TTCACACCTAGGTGTGAA-3' DNA sequence, or a half-site, which are present in the regulatory region of several genes. Probably plays a role in limb pattern formation. This Gallus gallus (Chicken) protein is T-box transcription factor TBX3 (TBX3).